We begin with the raw amino-acid sequence, 89 residues long: Protein RALF-like 5 (89 aa).

Residues Met1–Ala25 form the signal peptide. Disulfide bonds link Cys39–Cys48 and Cys61–Cys67.

The protein belongs to the plant rapid alkalinization factor (RALF) family.

The protein localises to the secreted. Functionally, cell signaling peptide that may regulate plant stress, growth, and development. Mediates a rapid alkalinization of extracellular space by mediating a transient increase in the cytoplasmic Ca(2+) concentration leading to a calcium-dependent signaling events through a cell surface receptor and a concomitant activation of some intracellular mitogen-activated protein kinases. This Arabidopsis thaliana (Mouse-ear cress) protein is Protein RALF-like 5 (RALFL5).